We begin with the raw amino-acid sequence, 192 residues long: Peptidyl-tRNA hydrolase (192 aa).

Position 17 (H17) interacts with tRNA. H22 acts as the Proton acceptor in catalysis. Positions 68, 70, and 116 each coordinate tRNA.

This sequence belongs to the PTH family. In terms of assembly, monomer.

The protein resides in the cytoplasm. The catalysed reaction is an N-acyl-L-alpha-aminoacyl-tRNA + H2O = an N-acyl-L-amino acid + a tRNA + H(+). In terms of biological role, hydrolyzes ribosome-free peptidyl-tRNAs (with 1 or more amino acids incorporated), which drop off the ribosome during protein synthesis, or as a result of ribosome stalling. Functionally, catalyzes the release of premature peptidyl moieties from peptidyl-tRNA molecules trapped in stalled 50S ribosomal subunits, and thus maintains levels of free tRNAs and 50S ribosomes. The sequence is that of Peptidyl-tRNA hydrolase from Stenotrophomonas maltophilia (strain K279a).